We begin with the raw amino-acid sequence, 161 residues long: Protein PLASTID TRANSCRIPTIONALLY ACTIVE 7 (161 aa).

The N-terminal 32 residues, 1–32, are a transit peptide targeting the chloroplast; the sequence is MASFTCSSPSSILPIIDTRSGNLRCTFQSQVS.

In terms of assembly, component of the transcriptionally active chromosome (TAC) complexes. Interacts with FLN1, PTAC10, PTAC12/HMR/PAP5 and PTAC14. Binds to SL1/MTERF3. In terms of tissue distribution, mostly expressed in leaves, flowers and seedlings, and, to a lower extent, in roots and stems.

Its subcellular location is the plastid. It is found in the chloroplast. Its function is as follows. Essential for chloroplast development, especially for thylakoid formation. Involved in plastid gene expression, probably by maintaining plastid-encoded RNA polymerase (PEP) activity. This is Protein PLASTID TRANSCRIPTIONALLY ACTIVE 7 from Arabidopsis thaliana (Mouse-ear cress).